The sequence spans 230 residues: Ribulose-phosphate 3-epimerase (230 aa).

Ser10 serves as a coordination point for substrate. The a divalent metal cation site is built by His35, Asp37, and His68. Asp37 (proton acceptor) is an active-site residue. Residues His68, 146-149 (GFGG), 179-181 (DGG), and 201-202 (GS) each bind substrate. Asp179 provides a ligand contact to a divalent metal cation. Asp179 functions as the Proton donor in the catalytic mechanism.

The protein belongs to the ribulose-phosphate 3-epimerase family. In terms of assembly, homohexamer. It depends on a divalent metal cation as a cofactor.

The enzyme catalyses D-ribulose 5-phosphate = D-xylulose 5-phosphate. The protein operates within carbohydrate degradation. In terms of biological role, catalyzes the reversible epimerization of D-ribulose 5-phosphate to D-xylulose 5-phosphate. The sequence is that of Ribulose-phosphate 3-epimerase from Synechocystis sp. (strain ATCC 27184 / PCC 6803 / Kazusa).